A 258-amino-acid polypeptide reads, in one-letter code: UPF0246 protein YPK_3600 (258 aa).

This sequence belongs to the UPF0246 family.

This Yersinia pseudotuberculosis serotype O:3 (strain YPIII) protein is UPF0246 protein YPK_3600.